The chain runs to 400 residues: Acetate kinase (400 aa).

A Mg(2+)-binding site is contributed by N7. K14 is an ATP binding site. Substrate is bound at residue R92. D149 functions as the Proton donor/acceptor in the catalytic mechanism. ATP contacts are provided by residues H209–G213, D283–R285, and G331–N335. Residue E385 participates in Mg(2+) binding.

It belongs to the acetokinase family. As to quaternary structure, homodimer. Mg(2+) is required as a cofactor. The cofactor is Mn(2+).

The protein localises to the cytoplasm. The catalysed reaction is acetate + ATP = acetyl phosphate + ADP. Its pathway is metabolic intermediate biosynthesis; acetyl-CoA biosynthesis; acetyl-CoA from acetate: step 1/2. In terms of biological role, catalyzes the formation of acetyl phosphate from acetate and ATP. Can also catalyze the reverse reaction. The polypeptide is Acetate kinase (Helicobacter acinonychis (strain Sheeba)).